We begin with the raw amino-acid sequence, 314 residues long: D-alanine--D-alanine ligase (314 aa).

Positions 112 to 307 constitute an ATP-grasp domain; it reads KQVWQSLGLP…FQQLVLSILD (196 aa). 138–193 provides a ligand contact to ATP; the sequence is AQMLGFPLIVKPAHEGSSIGMAKVGDVAELIAAWRAASAYDAQVLVEQWIQGPEFT. Residues Asp-261, Glu-274, and Asn-276 each coordinate Mg(2+).

The protein belongs to the D-alanine--D-alanine ligase family. The cofactor is Mg(2+). Mn(2+) serves as cofactor.

The protein localises to the cytoplasm. The enzyme catalyses 2 D-alanine + ATP = D-alanyl-D-alanine + ADP + phosphate + H(+). It participates in cell wall biogenesis; peptidoglycan biosynthesis. Its function is as follows. Cell wall formation. This chain is D-alanine--D-alanine ligase, found in Stutzerimonas stutzeri (strain A1501) (Pseudomonas stutzeri).